A 340-amino-acid polypeptide reads, in one-letter code: Proline-rich transmembrane protein 2 (340 aa).

Positions 1 to 261 are disordered; it reads MAASSSEISE…AGPGVEGGEG (261 aa). The Cytoplasmic portion of the chain corresponds to 1–268; sequence MAASSSEISE…GEGTQKPRDY (268 aa). Ser-28 bears the Phosphoserine mark. Thr-74 is modified (phosphothreonine). Pro residues-rich tracts occupy residues 131–155 and 197–207; these read PPEP…PKPA and APEPHSPPSKK. At Ser-238 the chain carries Phosphoserine. At Arg-240 the chain carries Omega-N-methylarginine. Phosphoserine occurs at positions 248 and 249. The segment at residues 269–289 is an intramembrane region (helical); sequence IILAILSCFCPMWPVNIVAFA. The Cytoplasmic portion of the chain corresponds to 290 to 317; sequence YAVMSRNSLQQGDVDGAQRLGRVAKLLS. Residues 318 to 338 traverse the membrane as a helical segment; sequence IVALVGGVLIIIASCVINLGV. The Extracellular portion of the chain corresponds to 339-340; the sequence is YK.

Belongs to the CD225/Dispanin family. In terms of assembly, component of the outer core of AMPAR complex. AMPAR complex consists of an inner core made of 4 pore-forming GluA/GRIA proteins (GRIA1, GRIA2, GRIA3 and GRIA4) and 4 major auxiliary subunits arranged in a twofold symmetry. One of the two pairs of distinct binding sites is occupied either by CNIH2, CNIH3 or CACNG2, CACNG3. The other harbors CACNG2, CACNG3, CACNG4, CACNG8 or GSG1L. This inner core of AMPAR complex is complemented by outer core constituents binding directly to the GluA/GRIA proteins at sites distinct from the interaction sites of the inner core constituents. Outer core constituents include at least PRRT1, PRRT2, CKAMP44/SHISA9, FRRS1L and NRN1. The proteins of the inner and outer core serve as a platform for other, more peripherally associated AMPAR constituents. Alone or in combination, these auxiliary subunits control the gating and pharmacology of the AMPAR complex and profoundly impact their biogenesis and protein processing. Interacts with intersectin 1/ITSN1. Interacts with SNARE complex components, including SNAP25, STX1A, SYT1 and SYT2; this interaction may inhibit SNARE complex formation.

The protein localises to the cell membrane. It is found in the presynaptic cell membrane. Its subcellular location is the synapse. The protein resides in the cell projection. It localises to the axon. The protein localises to the cytoplasmic vesicle. It is found in the secretory vesicle. Its subcellular location is the synaptic vesicle membrane. The protein resides in the postsynaptic density membrane. It localises to the dendritic spine. As a component of the outer core of AMPAR complex, may be involved in synaptic transmission in the central nervous system. In hippocampal neurons, in presynaptic terminals, plays an important role in the final steps of neurotransmitter release, possibly by regulating Ca(2+)-sensing. In the cerebellum, may inhibit SNARE complex formation and down-regulate short-term facilitation. In Pongo abelii (Sumatran orangutan), this protein is Proline-rich transmembrane protein 2 (PRRT2).